A 270-amino-acid polypeptide reads, in one-letter code: Protein-ADP-ribose hydrolase (270 aa).

Positions 73–267 (VSVKDCQKTN…LYDTYLQKEN (195 aa)) constitute a Macro domain. Residues Asp92, Ile93, and Asn106 each contribute to the ADP-D-ribose site. Zn(2+)-binding residues include Cys112, His117, and Cys119. Residues Cys119, Ile120, Asp121, Ser212, Thr213, Gly214, Glu215, and Phe216 each contribute to the ADP-D-ribose site.

This sequence belongs to the MacroD-type family. Zn-Macro subfamily. Monomer. Interacts with the lipoylated form of GcvH-L. Requires Zn(2+) as cofactor.

It catalyses the reaction 4-O-(ADP-D-ribosyl)-L-aspartyl-[protein] + H2O = L-aspartyl-[protein] + ADP-D-ribose + H(+). It carries out the reaction 5-O-(ADP-D-ribosyl)-L-glutamyl-[protein] + H2O = L-glutamyl-[protein] + ADP-D-ribose + H(+). The catalysed reaction is S-(ADP-D-ribosyl)-L-cysteinyl-[protein] + H2O = ADP-D-ribose + L-cysteinyl-[protein]. Its function is as follows. ADP-ribosylhydrolase that specifically reverses the SirTM-mediated mono-ADP-ribosylation at an asparatate residue of GcvH-L (SpyM50867), by releasing ADP-ribose from the target protein. May play a role in the regulation of the response to host-induced oxidative stress. It can also hydrolyze ADP-ribosyl-glutamate bonds and ADP-ribosyl-cysteine bonds. In vitro, it can remove the ADP-ribosyl modification from the human mono-ADP-ribosylated PARP1 E988Q mutant, which is primarily modified on glutamate site with only minor aspartate contribution. It can also hydrolyze the ADP-ribosyl-cysteinyl glycosidic bond of a Cys-ADP-ribosylated synthetic peptide. This Streptococcus pyogenes serotype M5 (strain Manfredo) protein is Protein-ADP-ribose hydrolase.